A 55-amino-acid chain; its full sequence is Large ribosomal subunit protein bL33 (55 aa).

It belongs to the bacterial ribosomal protein bL33 family.

The sequence is that of Large ribosomal subunit protein bL33 from Leifsonia xyli subsp. xyli (strain CTCB07).